Reading from the N-terminus, the 379-residue chain is Chaperone protein DnaJ (379 aa).

One can recognise a J domain in the interval 5-70 (DYYESLGVAK…QKRAAYDQYG (66 aa)). The CR-type zinc-finger motif lies at 134 to 212 (GVTKEIRIPA…CHGHGRVEKS (79 aa)). Positions 147, 150, 164, 167, 186, 189, 200, and 203 each coordinate Zn(2+). 4 CXXCXGXG motif repeats span residues 147-154 (CDVCHGNG), 164-171 (CPTCHGNG), 186-193 (CPHCHGRG), and 200-207 (CIKCHGHG).

It belongs to the DnaJ family. As to quaternary structure, homodimer. The cofactor is Zn(2+).

The protein resides in the cytoplasm. Functionally, participates actively in the response to hyperosmotic and heat shock by preventing the aggregation of stress-denatured proteins and by disaggregating proteins, also in an autonomous, DnaK-independent fashion. Unfolded proteins bind initially to DnaJ; upon interaction with the DnaJ-bound protein, DnaK hydrolyzes its bound ATP, resulting in the formation of a stable complex. GrpE releases ADP from DnaK; ATP binding to DnaK triggers the release of the substrate protein, thus completing the reaction cycle. Several rounds of ATP-dependent interactions between DnaJ, DnaK and GrpE are required for fully efficient folding. Also involved, together with DnaK and GrpE, in the DNA replication of plasmids through activation of initiation proteins. The sequence is that of Chaperone protein DnaJ from Pectobacterium atrosepticum (strain SCRI 1043 / ATCC BAA-672) (Erwinia carotovora subsp. atroseptica).